Consider the following 168-residue polypeptide: MNKWSRLYVITVRRTFPGRRNIVLTQYWNKSKKMSDESNDVKWNDALTPLQLMVLRDKATERPNTGAYLHTNESGVYHCANCDRPLYSSKAKFDARCGWPAFYEEVSPGAITYHRDNSLMPARVEICCARCGGHLGHVFEGEGWKQLLNLPKDTRHCVNSASLNLKKD.

The MsrB domain maps to 40–168 (DVKWNDALTP…NSASLNLKKD (129 aa)). Zn(2+) is bound by residues Cys79, Cys82, Cys128, and Cys131. An intrachain disulfide couples Cys97 to Cys157. The active-site Nucleophile is Cys157.

The protein belongs to the MsrB Met sulfoxide reductase family. Requires Zn(2+) as cofactor.

It carries out the reaction L-methionyl-[protein] + [thioredoxin]-disulfide + H2O = L-methionyl-(R)-S-oxide-[protein] + [thioredoxin]-dithiol. Functionally, methionine-R-sulfoxide reductase which catalyzes the reduction of methionine sulfoxide (MetSO) to methionine in proteins. Plays a protective role against oxidative stress by restoring activity to proteins that have been inactivated by methionine oxidation. Protects iron-sulfur clusters from oxidative inactivation along with MXR1. Involved in the regulation of lifespan. This chain is Peptide methionine sulfoxide reductase 2 (MXR2), found in Saccharomyces cerevisiae (strain ATCC 204508 / S288c) (Baker's yeast).